The chain runs to 347 residues: NADH-ubiquinone oxidoreductase chain 2 (347 aa).

11 helical membrane-spanning segments follow: residues 3 to 23, 25 to 45, 59 to 79, 96 to 116, 122 to 142, 149 to 169, 178 to 198, 200 to 220, 240 to 260, 274 to 294, and 326 to 346; these read PMTS…VLMS, HWFM…PILM, YFLT…INLM, TLIT…FWVP, VSLS…LSLL, INTN…GWGG, IMAY…IYNP, LSLL…MLLI, ITTM…LTGF, NSVI…FFYM, and MTML…FISL.

This sequence belongs to the complex I subunit 2 family. Core subunit of respiratory chain NADH dehydrogenase (Complex I) which is composed of 45 different subunits. Interacts with TMEM242.

It is found in the mitochondrion inner membrane. It carries out the reaction a ubiquinone + NADH + 5 H(+)(in) = a ubiquinol + NAD(+) + 4 H(+)(out). In terms of biological role, core subunit of the mitochondrial membrane respiratory chain NADH dehydrogenase (Complex I) which catalyzes electron transfer from NADH through the respiratory chain, using ubiquinone as an electron acceptor. Essential for the catalytic activity and assembly of complex I. The polypeptide is NADH-ubiquinone oxidoreductase chain 2 (Sylvisorex granti (Grant's forest shrew)).